The chain runs to 420 residues: Gamma-glutamyl phosphate reductase (420 aa).

Belongs to the gamma-glutamyl phosphate reductase family.

The protein localises to the cytoplasm. The enzyme catalyses L-glutamate 5-semialdehyde + phosphate + NADP(+) = L-glutamyl 5-phosphate + NADPH + H(+). It functions in the pathway amino-acid biosynthesis; L-proline biosynthesis; L-glutamate 5-semialdehyde from L-glutamate: step 2/2. Catalyzes the NADPH-dependent reduction of L-glutamate 5-phosphate into L-glutamate 5-semialdehyde and phosphate. The product spontaneously undergoes cyclization to form 1-pyrroline-5-carboxylate. The chain is Gamma-glutamyl phosphate reductase from Pasteurella multocida (strain Pm70).